The sequence spans 476 residues: Proline dehydrogenase 2, mitochondrial (476 aa).

Residues 1-29 (MANRFLRPNLIHRFSTVSPVGPPTTIIPE) constitute a mitochondrion transit peptide.

This sequence belongs to the proline oxidase family. Requires FAD as cofactor. Expressed in the vascular tissue and in the abscission zone of petals, sepals, stamina, pistils and siliques. Not detected in petioles.

It localises to the mitochondrion. It carries out the reaction L-proline + a quinone = (S)-1-pyrroline-5-carboxylate + a quinol + H(+). It functions in the pathway amino-acid degradation; L-proline degradation into L-glutamate; L-glutamate from L-proline: step 1/2. Functionally, converts proline to delta-1-pyrroline-5-carboxylate. This Arabidopsis thaliana (Mouse-ear cress) protein is Proline dehydrogenase 2, mitochondrial (POX2).